An 884-amino-acid chain; its full sequence is Alanine--tRNA ligase (884 aa).

H568, H572, C670, and H674 together coordinate Zn(2+).

Belongs to the class-II aminoacyl-tRNA synthetase family. Zn(2+) is required as a cofactor.

The protein localises to the cytoplasm. It carries out the reaction tRNA(Ala) + L-alanine + ATP = L-alanyl-tRNA(Ala) + AMP + diphosphate. Its function is as follows. Catalyzes the attachment of alanine to tRNA(Ala) in a two-step reaction: alanine is first activated by ATP to form Ala-AMP and then transferred to the acceptor end of tRNA(Ala). Also edits incorrectly charged Ser-tRNA(Ala) and Gly-tRNA(Ala) via its editing domain. The chain is Alanine--tRNA ligase from Synechococcus sp. (strain JA-2-3B'a(2-13)) (Cyanobacteria bacterium Yellowstone B-Prime).